Here is an 83-residue protein sequence, read N- to C-terminus: Small ribosomal subunit protein bS18 (83 aa).

A disordered region spans residues methionine 1–leucine 23.

Belongs to the bacterial ribosomal protein bS18 family. Part of the 30S ribosomal subunit. Forms a tight heterodimer with protein bS6.

In terms of biological role, binds as a heterodimer with protein bS6 to the central domain of the 16S rRNA, where it helps stabilize the platform of the 30S subunit. The chain is Small ribosomal subunit protein bS18 from Corynebacterium efficiens (strain DSM 44549 / YS-314 / AJ 12310 / JCM 11189 / NBRC 100395).